The following is a 474-amino-acid chain: Peroxisome proliferator-activated receptor alpha (474 aa).

The segment at residues 106 to 180 is a DNA-binding region (nuclear receptor); it reads NLECRVCSDK…VGMSHNAIRF (75 aa). 2 consecutive NR C4-type zinc fingers follow at residues 109–129 and 146–168; these read CRVCSDKASGFHYGVHACEGC and CERMCKIQKKNRNKCQYCRFEKC. Residues 245-472 enclose the NR LBD domain; that stretch reads FVIHDMETLC…HPLLQEIYRD (228 aa).

It belongs to the nuclear hormone receptor family. NR1 subfamily. Heterodimer with the retinoid X receptor. As to expression, ubiquitous.

The protein resides in the nucleus. Its function is as follows. Ligand-activated transcription factor. Key regulator of lipid metabolism. Activated by lipids. Receptor for peroxisome proliferators such as hypolipidemic drugs and fatty acids. Once activated by a ligand, the receptor binds to promoter elements of target genes. Regulates the peroxisomal beta-oxidation pathway of fatty acids. The sequence is that of Peroxisome proliferator-activated receptor alpha (ppara) from Xenopus laevis (African clawed frog).